Reading from the N-terminus, the 237-residue chain is Periplasmic deoxyribonuclease (237 aa).

Residues 1–27 (MSRPSRVLGLPLLSLGLTLLVSTPLQA) form the signal peptide.

It belongs to the EndA/NucM nuclease family.

The protein localises to the periplasm. Endonuclease which is capable of degrading plasmid DNA. This Aeromonas hydrophila protein is Periplasmic deoxyribonuclease (dnsH).